The primary structure comprises 241 residues: MGQKIHPTGFRLGITQDHWSRWFADTDRYPELLQEDFKVRNYVNKNLSNAGIAGVRIERKADQIDLEVRTARPGVVVGRGGSGIESLRVGLQKELGDDRPIRINVVEVARVDAEATLIAEYIVQQLVRRVSFRRVVRQAIQRAQRAGVEGIKIQVGGRLNGAEIARSEWTREGRVPLHTLRANIDYSYRTASTTYGILGVKVWVFKGEVIPGADEQPTNREPQQRRRQQQRRRQQFEDRSE.

One can recognise a KH type-2 domain in the interval 39–109 (VRNYVNKNLS…PIRINVVEVA (71 aa)). The tract at residues 213–241 (ADEQPTNREPQQRRRQQQRRRQQFEDRSE) is disordered.

The protein belongs to the universal ribosomal protein uS3 family. In terms of assembly, part of the 30S ribosomal subunit. Forms a tight complex with proteins S10 and S14.

Its function is as follows. Binds the lower part of the 30S subunit head. Binds mRNA in the 70S ribosome, positioning it for translation. The sequence is that of Small ribosomal subunit protein uS3 from Acaryochloris marina (strain MBIC 11017).